Reading from the N-terminus, the 461-residue chain is ATP synthase subunit beta 2 (461 aa).

Residue 151-158 (GGAGVGKT) participates in ATP binding.

The protein belongs to the ATPase alpha/beta chains family. In terms of assembly, F-type ATPases have 2 components, CF(1) - the catalytic core - and CF(0) - the membrane proton channel. CF(1) has five subunits: alpha(3), beta(3), gamma(1), delta(1), epsilon(1). CF(0) has three main subunits: a(1), b(2) and c(9-12). The alpha and beta chains form an alternating ring which encloses part of the gamma chain. CF(1) is attached to CF(0) by a central stalk formed by the gamma and epsilon chains, while a peripheral stalk is formed by the delta and b chains.

The protein localises to the cell inner membrane. It catalyses the reaction ATP + H2O + 4 H(+)(in) = ADP + phosphate + 5 H(+)(out). In terms of biological role, produces ATP from ADP in the presence of a proton gradient across the membrane. The catalytic sites are hosted primarily by the beta subunits. The chain is ATP synthase subunit beta 2 from Pseudoalteromonas atlantica (strain T6c / ATCC BAA-1087).